The following is a 483-amino-acid chain: MNYFPIFANLAGRPVLVVGGGAVAARKISLLLKAGAEVRVAAKHLNAELSALAAENKILWLAEEFRAEHIRTVFLIIAASSDQALNRRVFHLAESCQKPVNVVDDRDHCSFIFPSVIDRNPVQIAVSSSGSAPVLARLLRERLEALLPPSLGDMAEISGRWRDAVKGKLKSVTERRRFWEKQFNGRFAALVKNRQNTLAERELAGQLEQSRQNDQGGSVSLVGAGPGDAGLLTLKGLQEIQQADVVLYDALVSDGILSLVRRDAERIFVGKRARGERTPQEDTNALMVRLAREGRRVVRLKGGDPFVFGRGGEELETLARHQIPFSVVPGITAAVGATAYAGIPLTHRDYAQSAVFVTGHRKADAPDIEWQTLARSRQTLVIYMGALKAALIAERLQQHGRSPDTPAAVISQGTLPAQKTATGTLANLAELAETAPNPALIVIGEVVGLHEKLAWFGENGEGENRVGQTYPALGGLNAGQRAA.

Residues methionine 1–leucine 203 form a precorrin-2 dehydrogenase /sirohydrochlorin ferrochelatase region. Residues alanine 22–valine 23 and lysine 43–histidine 44 each bind NAD(+). Serine 128 is subject to Phosphoserine. The interval glycine 217–alanine 483 is uroporphyrinogen-III C-methyltransferase. Proline 226 lines the S-adenosyl-L-methionine pocket. The active-site Proton acceptor is aspartate 249. Lysine 271 functions as the Proton donor in the catalytic mechanism. S-adenosyl-L-methionine contacts are provided by residues glycine 302 to aspartate 304, valine 307, threonine 332 to alanine 333, methionine 384, and glycine 413.

This sequence in the N-terminal section; belongs to the precorrin-2 dehydrogenase / sirohydrochlorin ferrochelatase family. The protein in the C-terminal section; belongs to the precorrin methyltransferase family.

The enzyme catalyses uroporphyrinogen III + 2 S-adenosyl-L-methionine = precorrin-2 + 2 S-adenosyl-L-homocysteine + H(+). It carries out the reaction precorrin-2 + NAD(+) = sirohydrochlorin + NADH + 2 H(+). It catalyses the reaction siroheme + 2 H(+) = sirohydrochlorin + Fe(2+). It participates in cofactor biosynthesis; adenosylcobalamin biosynthesis; precorrin-2 from uroporphyrinogen III: step 1/1. Its pathway is cofactor biosynthesis; adenosylcobalamin biosynthesis; sirohydrochlorin from precorrin-2: step 1/1. It functions in the pathway porphyrin-containing compound metabolism; siroheme biosynthesis; precorrin-2 from uroporphyrinogen III: step 1/1. The protein operates within porphyrin-containing compound metabolism; siroheme biosynthesis; siroheme from sirohydrochlorin: step 1/1. It participates in porphyrin-containing compound metabolism; siroheme biosynthesis; sirohydrochlorin from precorrin-2: step 1/1. Its function is as follows. Multifunctional enzyme that catalyzes the SAM-dependent methylations of uroporphyrinogen III at position C-2 and C-7 to form precorrin-2 via precorrin-1. Then it catalyzes the NAD-dependent ring dehydrogenation of precorrin-2 to yield sirohydrochlorin. Finally, it catalyzes the ferrochelation of sirohydrochlorin to yield siroheme. The protein is Siroheme synthase of Neisseria meningitidis serogroup B (strain ATCC BAA-335 / MC58).